A 389-amino-acid polypeptide reads, in one-letter code: Urea transporter 1 (389 aa).

5 helical membrane-spanning segments follow: residues Pro-53–Asn-73, Trp-91–Leu-110, Leu-116–Phe-136, Phe-143–Ala-163, and Leu-173–His-193. Asn-211 carries an N-linked (GlcNAc...) asparagine glycan. The next 4 helical transmembrane spans lie at Gly-242 to Ile-262, Ile-281 to Phe-301, Leu-310 to Met-330, and Val-333 to Thr-353.

This sequence belongs to the urea transporter family. Homotrimer; each subunit contains a pore through which urea permeates. Identified in a complex with STOM. As to expression, detected in erythrocytes (at protein level). Expressed in spleen erythroblasts and tumoral kidney.

The protein resides in the cell membrane. Its subcellular location is the basolateral cell membrane. It catalyses the reaction urea(in) = urea(out). With respect to regulation, inhibited by phloretin and para-chloromercuribenzene sulfonate. In terms of biological role, mediates the transport of urea driven by a concentration gradient across the cell membrane of erythrocytes. Also mediates the transport of urea across the cell membrane of the renal inner medullary collecting duct which is critical to the urinary concentrating mechanism. Facilitates water transport in erythrocytes. The chain is Urea transporter 1 (SLC14A1) from Homo sapiens (Human).